A 175-amino-acid polypeptide reads, in one-letter code: Translation initiation factor IF-3 (175 aa).

The protein belongs to the IF-3 family. As to quaternary structure, monomer.

The protein localises to the cytoplasm. Its function is as follows. IF-3 binds to the 30S ribosomal subunit and shifts the equilibrium between 70S ribosomes and their 50S and 30S subunits in favor of the free subunits, thus enhancing the availability of 30S subunits on which protein synthesis initiation begins. The sequence is that of Translation initiation factor IF-3 from Staphylococcus epidermidis (strain ATCC 35984 / DSM 28319 / BCRC 17069 / CCUG 31568 / BM 3577 / RP62A).